We begin with the raw amino-acid sequence, 292 residues long: Troponin I (292 aa).

S1 is modified (N-acetylserine). The tract at residues 1–149 is disordered; that stretch reads SSLEERRAAR…GLGGLSPEKK (149 aa). Positions 46-55 are enriched in low complexity; that stretch reads YSAPAEPAYD. Residues 58 to 134 show a composition bias toward basic and acidic residues; it reads AENRRRQQQE…EARRMAEEQK (77 aa). The segment at 237–250 is actin-binding; sequence DTKGKFVKPVLRKV. Residues 255 to 292 are disordered; that stretch reads SKLDKIQRKEAKKSDFRDNLKSSREHEADKEGGEGENE.

This sequence belongs to the troponin I family.

Troponin I is the inhibitory subunit of troponin, the thin filament regulatory complex which confers calcium-sensitivity to striated muscle actomyosin ATPase activity. In Chlamys nipponensis akazara (Akazara scallop), this protein is Troponin I.